Here is a 217-residue protein sequence, read N- to C-terminus: Small ribosomal subunit protein uS3 (217 aa).

The KH type-2 domain maps to 38 to 106 (IRKFVQKELA…QVHINIIEIK (69 aa)).

This sequence belongs to the universal ribosomal protein uS3 family. In terms of assembly, part of the 30S ribosomal subunit. Forms a tight complex with proteins S10 and S14.

Its function is as follows. Binds the lower part of the 30S subunit head. Binds mRNA in the 70S ribosome, positioning it for translation. The polypeptide is Small ribosomal subunit protein uS3 (Streptococcus sanguinis (strain SK36)).